Here is a 196-residue protein sequence, read N- to C-terminus: Bcl-2-like protein 11 (196 aa).

The tract at residues 1 to 68 (MAKQPSDVNS…PLAPPASPGP (68 aa)) is disordered. Over residues 34–43 (TSLQTESQGN) the composition is skewed to polar residues. Ser65 is subject to Phosphoserine; by MAPK. 3 positions are modified to phosphoserine: Ser73, Ser83, and Ser90. Residues 90–114 (SGYFSFDTDRSPAPMSCDKSTQTPS) form a disordered region. A BH3 motif is present at residues 146 to 160 (IAQELRRIGDEFNET).

It belongs to the Bcl-2 family. As to quaternary structure, forms heterodimers with a number of antiapoptotic Bcl-2 proteins, including MCL1, BCL2, BCL2L1 isoform Bcl-X(L), BCL2A1/BFL-1, and BCL2L2/BCLW. Does not heterodimerize with proapoptotic proteins such as BAD, BOK or BAK. Identified in a complex containing BCL2L11, DYNLL1 and BCL2L1 isoform Bcl-X(L); BH3 integrity is required for BCL2L1-binding. Interacts with YWHAZ. When phosphorylated, interacts with TRIM2; this interaction is associated with ubiquitination and degradation. Interacts (via BH3) with MCL1; this interaction may sequester BCL2L11 and prevent its pro-apoptotic activity. When phosphorylated, isoform BimEL interacts with USP27X; this interaction leads to BCL2L11 deubiquitination and stabilization. Interacts with GIMAP5. Interacts with BCL2L10/BCL-B. Phosphorylation at Ser-65 by MAPK1/MAPK3 leads interaction with TRIM2 and ubiquitination, followed by proteasomal degradation. Deubiquitination catalyzed by USP27X stabilizes the protein. In terms of processing, ubiquitination by TRIM2 following phosphorylation by MAPK1/MAPK3 leads to proteasomal degradation. Conversely, deubiquitination catalyzed by USP27X stabilizes the protein. Widely expressed.

The protein resides in the membrane. The protein localises to the mitochondrion. In terms of biological role, induces apoptosis and anoikis. This is Bcl-2-like protein 11 (Bcl2l11) from Rattus norvegicus (Rat).